The primary structure comprises 72 residues: Large ribosomal subunit protein bL31c (72 aa).

This sequence belongs to the bacterial ribosomal protein bL31 family. Type A subfamily. In terms of assembly, part of the 50S ribosomal subunit.

The protein resides in the plastid. It is found in the chloroplast. In terms of biological role, binds the 23S rRNA. This chain is Large ribosomal subunit protein bL31c, found in Guillardia theta (Cryptophyte).